A 470-amino-acid chain; its full sequence is AAA-ATPase At5g17730 (470 aa).

Residues 1-18 (MFSLRNLPSLAPFVSAYA) form the signal peptide. 252-259 (GPPGTGKT) contributes to the ATP binding site.

This sequence belongs to the AAA ATPase family. BCS1 subfamily. It depends on Mg(2+) as a cofactor.

It catalyses the reaction ATP + H2O = ADP + phosphate + H(+). This Arabidopsis thaliana (Mouse-ear cress) protein is AAA-ATPase At5g17730.